A 132-amino-acid polypeptide reads, in one-letter code: MVMTDPIADFLTRIRNANLAKHEVLEVPASNIKKGIAEILKREGFVKNVEVIEDDKQGIIRVFLKYGQNGERVITNLKRISKPGLRVYSKREDVPKVLNGLGIAIISTSEGLLTDKEARQKNVGGEVIAYVW.

It belongs to the universal ribosomal protein uS8 family. Part of the 30S ribosomal subunit. Contacts proteins S5 and S12.

In terms of biological role, one of the primary rRNA binding proteins, it binds directly to 16S rRNA central domain where it helps coordinate assembly of the platform of the 30S subunit. The protein is Small ribosomal subunit protein uS8 of Streptococcus uberis (strain ATCC BAA-854 / 0140J).